The chain runs to 197 residues: Holliday junction branch migration complex subunit RuvA (197 aa).

Positions 1–64 are domain I; that stretch reads MIGRISGLLL…EDAHLLFGFA (64 aa). The segment at 65 to 142 is domain II; it reads TEGERQAFRQ…DLGVSAIPGA (78 aa). The interval 143-153 is flexible linker; that stretch reads AGARRPSTMGS. The tract at residues 153 to 197 is domain III; sequence SDVLNALLSLGYNDREANWAVSQLSVDLSVSDGIRQALKFLSKEK.

Belongs to the RuvA family. In terms of assembly, homotetramer. Forms an RuvA(8)-RuvB(12)-Holliday junction (HJ) complex. HJ DNA is sandwiched between 2 RuvA tetramers; dsDNA enters through RuvA and exits via RuvB. An RuvB hexamer assembles on each DNA strand where it exits the tetramer. Each RuvB hexamer is contacted by two RuvA subunits (via domain III) on 2 adjacent RuvB subunits; this complex drives branch migration. In the full resolvosome a probable DNA-RuvA(4)-RuvB(12)-RuvC(2) complex forms which resolves the HJ.

The protein resides in the cytoplasm. In terms of biological role, the RuvA-RuvB-RuvC complex processes Holliday junction (HJ) DNA during genetic recombination and DNA repair, while the RuvA-RuvB complex plays an important role in the rescue of blocked DNA replication forks via replication fork reversal (RFR). RuvA specifically binds to HJ cruciform DNA, conferring on it an open structure. The RuvB hexamer acts as an ATP-dependent pump, pulling dsDNA into and through the RuvAB complex. HJ branch migration allows RuvC to scan DNA until it finds its consensus sequence, where it cleaves and resolves the cruciform DNA. In Nitrosospira multiformis (strain ATCC 25196 / NCIMB 11849 / C 71), this protein is Holliday junction branch migration complex subunit RuvA.